A 764-amino-acid chain; its full sequence is Protein translocase subunit SecA 2 (764 aa).

ATP contacts are provided by residues glutamine 83, 101 to 105, and aspartate 490; that span reads GEGKT.

It belongs to the SecA family. As to quaternary structure, monomer and homodimer. Part of the essential Sec protein translocation apparatus which comprises SecA, SecYEG and auxiliary proteins SecDF. Other proteins may also be involved.

It is found in the cell membrane. Its subcellular location is the cytoplasm. The catalysed reaction is ATP + H2O + cellular proteinSide 1 = ADP + phosphate + cellular proteinSide 2.. Its function is as follows. Part of the Sec protein translocase complex. Interacts with the SecYEG preprotein conducting channel. Has a central role in coupling the hydrolysis of ATP to the transfer of proteins into and across the cell membrane, serving as an ATP-driven molecular motor driving the stepwise translocation of polypeptide chains across the membrane. This Corynebacterium diphtheriae (strain ATCC 700971 / NCTC 13129 / Biotype gravis) protein is Protein translocase subunit SecA 2.